A 161-amino-acid chain; its full sequence is Probable endopeptidase HI_1314 (161 aa).

Residues 1 to 18 form the signal peptide; it reads MKVYKSFLIATASLFLFA. The N-palmitoyl cysteine moiety is linked to residue cysteine 19. Cysteine 19 carries S-diacylglycerol cysteine lipidation. In terms of domain architecture, NlpC/P60 spans 39–161; the sequence is IMAIAMLSEQ…SKAFWQVRRI (123 aa). The active-site Nucleophile is cysteine 69. Residue histidine 122 is the Proton acceptor of the active site. Histidine 134 is an active-site residue.

Belongs to the peptidase C40 family.

The protein resides in the cell membrane. The protein is Probable endopeptidase HI_1314 of Haemophilus influenzae (strain ATCC 51907 / DSM 11121 / KW20 / Rd).